Reading from the N-terminus, the 400-residue chain is Enoyl-[acyl-carrier-protein] reductase [NADH] (400 aa).

NAD(+) contacts are provided by residues glycine 48–tyrosine 53, phenylalanine 74–glutamate 75, aspartate 111–alanine 112, and leucine 139–alanine 140. Tyrosine 225 serves as a coordination point for substrate. Tyrosine 235 functions as the Proton donor in the catalytic mechanism. NAD(+) is bound by residues lysine 244 and valine 273–threonine 275.

Belongs to the TER reductase family. In terms of assembly, monomer.

It catalyses the reaction a 2,3-saturated acyl-[ACP] + NAD(+) = a (2E)-enoyl-[ACP] + NADH + H(+). The protein operates within lipid metabolism; fatty acid biosynthesis. Involved in the final reduction of the elongation cycle of fatty acid synthesis (FAS II). Catalyzes the reduction of a carbon-carbon double bond in an enoyl moiety that is covalently linked to an acyl carrier protein (ACP). The polypeptide is Enoyl-[acyl-carrier-protein] reductase [NADH] (Shewanella pealeana (strain ATCC 700345 / ANG-SQ1)).